A 179-amino-acid polypeptide reads, in one-letter code: Negative modulator of initiation of replication (179 aa).

The interval 86–87 is interaction with DNA; it reads AV.

The protein belongs to the SeqA family. Homodimer. Polymerizes to form helical filaments.

It localises to the cytoplasm. Its function is as follows. Negative regulator of replication initiation, which contributes to regulation of DNA replication and ensures that replication initiation occurs exactly once per chromosome per cell cycle. Binds to pairs of hemimethylated GATC sequences in the oriC region, thus preventing assembly of replication proteins and re-initiation at newly replicated origins. Repression is relieved when the region becomes fully methylated. The protein is Negative modulator of initiation of replication of Shewanella woodyi (strain ATCC 51908 / MS32).